The sequence spans 131 residues: Small ribosomal subunit protein uS8 (131 aa).

The protein belongs to the universal ribosomal protein uS8 family. In terms of assembly, part of the 30S ribosomal subunit. Contacts proteins S5 and S12.

In terms of biological role, one of the primary rRNA binding proteins, it binds directly to 16S rRNA central domain where it helps coordinate assembly of the platform of the 30S subunit. This chain is Small ribosomal subunit protein uS8, found in Solibacter usitatus (strain Ellin6076).